The chain runs to 99 residues: Small ribosomal subunit protein uS19 (99 aa).

The protein belongs to the universal ribosomal protein uS19 family.

Protein S19 forms a complex with S13 that binds strongly to the 16S ribosomal RNA. In Sulfurihydrogenibium sp. (strain YO3AOP1), this protein is Small ribosomal subunit protein uS19.